The primary structure comprises 70 residues: U2-agatoxin-Ao1p (70 aa).

An N-terminal signal peptide occupies residues 1–20 (MRAIISLILISAMVFSMIAA). A propeptide spanning residues 21–34 (VPXXEGLQLSEDER) is cleaved from the precursor. 3 cysteine pairs are disulfide-bonded: cysteine 37-cysteine 53, cysteine 44-cysteine 58, and cysteine 52-cysteine 68. Leucine 69 carries the leucine amide modification.

It belongs to the neurotoxin 01 (U2-agtx) family. Expressed by the venom gland.

The protein localises to the secreted. Insect active toxin causing rapid but reversible paralysis in crickets. No activity shown in mammals. Does not show effect on mammalian voltage-gated calcium channels. This Agelena orientalis (Funnel-web spider) protein is U2-agatoxin-Ao1p.